Reading from the N-terminus, the 469-residue chain is Glutamine synthetase (469 aa).

The GS beta-grasp domain occupies 14 to 98 (NDVKYVDLRF…VVCDVLEPTT (85 aa)). Residues 106–469 (PRGIAKKAMA…PVEFEMYYSV (364 aa)) form the GS catalytic domain. The Mg(2+) site is built by E131 and E133. ATP is bound at residue E209. The Mg(2+) site is built by E214 and E221. L-glutamate-binding positions include 265–266 (NG) and G266. H270 contributes to the Mg(2+) binding site. Residues 272 to 274 (HQS) and S274 each bind ATP. Residues R322, E328, and R340 each contribute to the L-glutamate site. R340, R345, and K353 together coordinate ATP. E358 is a binding site for Mg(2+). R360 serves as a coordination point for L-glutamate. Y398 is subject to O-AMP-tyrosine.

The protein belongs to the glutamine synthetase family. As to quaternary structure, oligomer of 12 subunits arranged in the form of two hexameric ring. The cofactor is Mg(2+).

It localises to the cytoplasm. It carries out the reaction L-glutamate + NH4(+) + ATP = L-glutamine + ADP + phosphate + H(+). The activity of this enzyme could be controlled by adenylation under conditions of abundant glutamine. Its function is as follows. Catalyzes the ATP-dependent biosynthesis of glutamine from glutamate and ammonia. This Azorhizobium caulinodans (strain ATCC 43989 / DSM 5975 / JCM 20966 / LMG 6465 / NBRC 14845 / NCIMB 13405 / ORS 571) protein is Glutamine synthetase.